A 141-amino-acid polypeptide reads, in one-letter code: Large ribosomal subunit protein uL16 (141 aa).

The tract at residues 1-21 (MLMPKRVKYRKQQRGHNRGMA) is disordered.

It belongs to the universal ribosomal protein uL16 family. As to quaternary structure, part of the 50S ribosomal subunit.

Binds 23S rRNA and is also seen to make contacts with the A and possibly P site tRNAs. The chain is Large ribosomal subunit protein uL16 from Roseiflexus castenholzii (strain DSM 13941 / HLO8).